The following is a 184-amino-acid chain: Large ribosomal subunit protein uL6 (184 aa).

It belongs to the universal ribosomal protein uL6 family. As to quaternary structure, part of the 50S ribosomal subunit.

This protein binds to the 23S rRNA, and is important in its secondary structure. It is located near the subunit interface in the base of the L7/L12 stalk, and near the tRNA binding site of the peptidyltransferase center. This is Large ribosomal subunit protein uL6 from Thermococcus kodakarensis (strain ATCC BAA-918 / JCM 12380 / KOD1) (Pyrococcus kodakaraensis (strain KOD1)).